Reading from the N-terminus, the 325-residue chain is Ribosomal RNA small subunit methyltransferase H (325 aa).

The segment at 1–28 is disordered; it reads MTASQPLDQADQDSESSSAGSSAAETEH. The span at 15–24 shows a compositional bias: low complexity; the sequence is ESSSAGSSAA. S-adenosyl-L-methionine contacts are provided by residues 56–58, D82, Y110, D131, and Q138; that span reads GGH. The disordered stretch occupies residues 303–325; the sequence is TDEEVQANPRSRSAKLRVAKRVE. Over residues 314–325 the composition is skewed to basic residues; that stretch reads RSAKLRVAKRVE.

This sequence belongs to the methyltransferase superfamily. RsmH family.

Its subcellular location is the cytoplasm. The enzyme catalyses cytidine(1402) in 16S rRNA + S-adenosyl-L-methionine = N(4)-methylcytidine(1402) in 16S rRNA + S-adenosyl-L-homocysteine + H(+). Functionally, specifically methylates the N4 position of cytidine in position 1402 (C1402) of 16S rRNA. In Rhodopirellula baltica (strain DSM 10527 / NCIMB 13988 / SH1), this protein is Ribosomal RNA small subunit methyltransferase H.